The sequence spans 486 residues: Malonate-semialdehyde dehydrogenase (486 aa).

Positions 154, 178, 181, 182, and 231 each coordinate NAD(+). The Nucleophile role is filled by cysteine 286. Glutamate 386 is an NAD(+) binding site.

This sequence belongs to the aldehyde dehydrogenase family. IolA subfamily. As to quaternary structure, homotetramer.

It catalyses the reaction 3-oxopropanoate + NAD(+) + CoA + H2O = hydrogencarbonate + acetyl-CoA + NADH + H(+). The catalysed reaction is 2-methyl-3-oxopropanoate + NAD(+) + CoA + H2O = propanoyl-CoA + hydrogencarbonate + NADH + H(+). The protein operates within polyol metabolism; myo-inositol degradation into acetyl-CoA; acetyl-CoA from myo-inositol: step 7/7. In terms of biological role, catalyzes the oxidation of malonate semialdehyde (MSA) and methylmalonate semialdehyde (MMSA) into acetyl-CoA and propanoyl-CoA, respectively. Is involved in a myo-inositol catabolic pathway. Bicarbonate, and not CO2, is the end-product of the enzymatic reaction. The sequence is that of Malonate-semialdehyde dehydrogenase from Bacillus pumilus (strain SAFR-032).